The sequence spans 736 residues: Fidgetin (736 aa).

Disordered stretches follow at residues 118–155, 180–248, 272–295, and 341–438; these read GMTP…CGNH, TYSG…YSPG, IPGY…GSSA, and STRG…AEEQ. The span at 128–150 shows a compositional bias: low complexity; the sequence is VTASVGSSTGVASSLSEPSYSSS. Residues 205–214 show a composition bias toward pro residues; sequence QPPPPPPPTL. Over residues 216–232 the composition is skewed to low complexity; that stretch reads PSYNTSSPNLSSYNYPP. Residues 352 to 368 show a composition bias toward polar residues; sequence DTSSLAFKPTKQSMPTD. ATP is bound by residues alanine 467 and 507-512; that span reads GTGRTL.

It belongs to the AAA ATPase family.

The protein resides in the nucleus matrix. Its subcellular location is the cytoplasm. It is found in the cytoskeleton. It localises to the microtubule organizing center. The protein localises to the centrosome. Its function is as follows. ATP-dependent microtubule severing protein. Severs microtubules along their length and depolymerizes their ends, primarily the minus-end, suppressing microtubule growth from and attachment to centrosomes. Microtubule severing may promote rapid reorganization of cellular microtubule arrays and the release of microtubules from the centrosome following nucleation. Microtubule release from the mitotic spindle poles may allow depolymerization of the microtubule end proximal to the spindle pole, leading to poleward microtubule flux and poleward motion of chromosome. The polypeptide is Fidgetin (fign) (Danio rerio (Zebrafish)).